The chain runs to 576 residues: Sodium/hydrogen exchanger 8 (576 aa).

Helical transmembrane passes span 55–75, 79–99, 118–138, 151–171, 186–206, 256–276, 306–326, 349–369, 374–394, 412–432, and 446–466; these read MTIFFSLLVLAICIILVHLLI, LHFLPESVAVVSLGILMGAVI, PNMFFLLLLPPIIFESGYSLH, LFAVFGTAISAFVVGGGIYFL, FAFGSLISAVDPVATIAIFNA, LGYFLKMFFGSAALGTLTGLI, GLAEGISLSGIMAILFSGIVM, VAFLCETCVFAFLGLSIFSFP, ISFVIWCIVLVLFGRAVNIFP, MFIMWFSGLRGAIPYALSLHL, and TTIVIVLFTILLLGGSTMPLI. Threonine 505 carries the post-translational modification Phosphothreonine. Phosphoserine occurs at positions 566 and 568.

It belongs to the monovalent cation:proton antiporter 1 (CPA1) transporter (TC 2.A.36) family. In terms of tissue distribution, predominantly expressed in the liver, skeletal muscle, kidney, and testis. Expressed in both renal cortex and medulla. Detected throughout the entire gastrointestinal tract, with high expression detected in stomach, duodenum and ascending colon. In gastric epithelium; expressed in the glands within the fundus and pylorus regions.

It localises to the golgi apparatus membrane. The protein resides in the golgi apparatus. Its subcellular location is the trans-Golgi network membrane. It is found in the endosome. The protein localises to the multivesicular body membrane. It localises to the apical cell membrane. The protein resides in the cytoplasmic vesicle. Its subcellular location is the secretory vesicle. It is found in the acrosome. It catalyses the reaction Na(+)(in) + H(+)(out) = Na(+)(out) + H(+)(in). Functionally, na(+)/H(+) antiporter. Mediates the electoneutral exchange of intracellular H(+) ions for extracellular Na(+) in 1:1 stoichiometry. Acts as an Na(+)/H(+) exchanger in the trans-Golgi. Contributes to the regulation of pH regulation of Golgi apparatus, and consequently, in protein trafficking and endosomal morphology. Plays a crucial role in germ cells in acrosome biogenesis and sperm development, probably by playing a role in the fusion of the Golgi-derived vesicles that form the acrosomal cap. Can also be active at the cell surface of specialized cells. In the small intestine, plays a major physiological role in transepithelial absorption of Na(+). Regulates intracellular pH homeostasis of intestinal epithelial cells. Acts as an important regulator of mucosal integrity in the intestine and in the stomach, could mediate the pH fluctuation necessary for mucin exocytosis or assist membrane trafficking of other proteins. Plays a role in photoreceptor survival and in the maintenance of intracellular pH homeostasis in retinal pigment epithelium (RPE cells). In Mus musculus (Mouse), this protein is Sodium/hydrogen exchanger 8 (Slc9a8).